A 397-amino-acid chain; its full sequence is Elongation factor Tu (397 aa).

Residues 10–207 form the tr-type G domain; sequence KPHLNIGTIG…AVDAYIPEPE (198 aa). A G1 region spans residues 19-26; that stretch reads GHVDHGKT. 19 to 26 lines the GTP pocket; it reads GHVDHGKT. T26 is a binding site for Mg(2+). The tract at residues 60–64 is G2; sequence GVTIN. Residues 81–84 form a G3 region; the sequence is DCPG. Residues 81–85 and 136–139 contribute to the GTP site; these read DCPGH and NKVD. Positions 136 to 139 are G4; the sequence is NKVD. A G5 region spans residues 174 to 176; it reads SAL.

The protein belongs to the TRAFAC class translation factor GTPase superfamily. Classic translation factor GTPase family. EF-Tu/EF-1A subfamily. In terms of assembly, monomer.

Its subcellular location is the cytoplasm. The catalysed reaction is GTP + H2O = GDP + phosphate + H(+). GTP hydrolase that promotes the GTP-dependent binding of aminoacyl-tRNA to the A-site of ribosomes during protein biosynthesis. The polypeptide is Elongation factor Tu (Syntrophus aciditrophicus (strain SB)).